Here is a 145-residue protein sequence, read N- to C-terminus: D-aminoacyl-tRNA deacylase (145 aa).

Residues 137–138 (GP) carry the Gly-cisPro motif, important for rejection of L-amino acids motif.

This sequence belongs to the DTD family. Homodimer.

It is found in the cytoplasm. The enzyme catalyses glycyl-tRNA(Ala) + H2O = tRNA(Ala) + glycine + H(+). It catalyses the reaction a D-aminoacyl-tRNA + H2O = a tRNA + a D-alpha-amino acid + H(+). An aminoacyl-tRNA editing enzyme that deacylates mischarged D-aminoacyl-tRNAs. Also deacylates mischarged glycyl-tRNA(Ala), protecting cells against glycine mischarging by AlaRS. Acts via tRNA-based rather than protein-based catalysis; rejects L-amino acids rather than detecting D-amino acids in the active site. By recycling D-aminoacyl-tRNA to D-amino acids and free tRNA molecules, this enzyme counteracts the toxicity associated with the formation of D-aminoacyl-tRNA entities in vivo and helps enforce protein L-homochirality. The chain is D-aminoacyl-tRNA deacylase from Pseudoalteromonas atlantica (strain T6c / ATCC BAA-1087).